A 149-amino-acid polypeptide reads, in one-letter code: Large ribosomal subunit protein uL13 (149 aa).

This sequence belongs to the universal ribosomal protein uL13 family. As to quaternary structure, part of the 50S ribosomal subunit.

Functionally, this protein is one of the early assembly proteins of the 50S ribosomal subunit, although it is not seen to bind rRNA by itself. It is important during the early stages of 50S assembly. The chain is Large ribosomal subunit protein uL13 from Chlorobium limicola (strain DSM 245 / NBRC 103803 / 6330).